A 325-amino-acid polypeptide reads, in one-letter code: UPF0285 protein MM_0679 (325 aa).

The protein belongs to the UPF0285 family.

This Methanosarcina mazei (strain ATCC BAA-159 / DSM 3647 / Goe1 / Go1 / JCM 11833 / OCM 88) (Methanosarcina frisia) protein is UPF0285 protein MM_0679.